The chain runs to 220 residues: Inner kinetochore subunit fta3 (220 aa).

This sequence belongs to the CENP-H/MCM16 family. In terms of assembly, component of the inner kinetochore constitutive centromere-associated network (CCAN) (also known as central kinetochore Sim4 complex in fission yeast), which is composed of at least cnl2, cnp3, cnp20, fta1, fta2, fta3, fta4, fta6, fta7, mal2, mhf1, mhf2, mis6, mis15, mis17, sim4 and wip1.

Its subcellular location is the nucleus. The protein localises to the chromosome. The protein resides in the centromere. It is found in the kinetochore. Functionally, component of the kinetochore, a multiprotein complex that assembles on centromeric DNA and attaches chromosomes to spindle microtubules, mediating chromosome segregation and sister chromatid segregation during meiosis and mitosis. Component of the inner kinetochore constitutive centromere-associated network (CCAN), which serves as a structural platform for outer kinetochore assembly. Fta2, fta3 and fta4 associate with the central core (cnt) and inner repeat (inr) region of the centromere. This Schizosaccharomyces pombe (strain 972 / ATCC 24843) (Fission yeast) protein is Inner kinetochore subunit fta3 (fta3).